Consider the following 308-residue polypeptide: Ankyrin repeat and SOCS box protein 12 (308 aa).

5 ANK repeats span residues 63–92 (IPGT…DVDS), 96–125 (KAQT…CPSG), 129–158 (NNCS…EANV), 171–200 (SCSG…DPDY), and 213–243 (QPRT…NIYL). Positions 268–308 (PRSLLSQTRLVIRRSLCRANQSQATDQLDIPPVLISYLKHQ) constitute an SOCS box domain.

It belongs to the ankyrin SOCS box (ASB) family. Interacts with CUL5 and RNF7.

It participates in protein modification; protein ubiquitination. Its function is as follows. Probable substrate-recognition component of a SCF-like ECS (Elongin-Cullin-SOCS-box protein) E3 ubiquitin-protein ligase complex which mediates the ubiquitination and subsequent proteasomal degradation of target proteins. This Mus musculus (Mouse) protein is Ankyrin repeat and SOCS box protein 12 (Asb12).